The chain runs to 129 residues: Small ribosomal subunit protein uS11 (129 aa).

Belongs to the universal ribosomal protein uS11 family. As to quaternary structure, part of the 30S ribosomal subunit. Interacts with proteins S7 and S18. Binds to IF-3.

Located on the platform of the 30S subunit, it bridges several disparate RNA helices of the 16S rRNA. Forms part of the Shine-Dalgarno cleft in the 70S ribosome. This is Small ribosomal subunit protein uS11 from Vibrio campbellii (strain ATCC BAA-1116).